The following is a 119-amino-acid chain: Large ribosomal subunit protein uL24 (119 aa).

Belongs to the universal ribosomal protein uL24 family. Part of the 50S ribosomal subunit.

Its function is as follows. One of two assembly initiator proteins, it binds directly to the 5'-end of the 23S rRNA, where it nucleates assembly of the 50S subunit. In terms of biological role, located at the polypeptide exit tunnel on the outside of the subunit. The chain is Large ribosomal subunit protein uL24 from Methanococcus maripaludis (strain DSM 14266 / JCM 13030 / NBRC 101832 / S2 / LL).